The following is a 280-amino-acid chain: F-actin-capping protein subunit alpha (280 aa).

Belongs to the F-actin-capping protein alpha subunit family. Heterodimer of an alpha and a beta subunit.

The protein resides in the cytoplasm. It is found in the cytoskeleton. Its function is as follows. F-actin-capping proteins bind in a Ca(2+)-independent manner to the fast growing ends of actin filaments (barbed end) thereby blocking the exchange of subunits at these ends. Unlike other capping proteins (such as gelsolin and severin), these proteins do not sever actin filaments. This Candida albicans (strain SC5314 / ATCC MYA-2876) (Yeast) protein is F-actin-capping protein subunit alpha (CAP01).